Here is a 154-residue protein sequence, read N- to C-terminus: MRCSVTKFFCSTAKKSQMVERVKDYMYKNDKLFELLDARILEMKEGYAKVEMVVKKEHLNAANVCHGGIIFSLADLAFALASNSHGKLALAIEVSITYMKAAYEGEKLVAEAKEVNLGNKTATYLMEVKNSANKLIALAKGTVYRVNEDFPPTS.

This sequence belongs to the thioesterase PaaI family.

The chain is Putative esterase AF_2264 from Archaeoglobus fulgidus (strain ATCC 49558 / DSM 4304 / JCM 9628 / NBRC 100126 / VC-16).